Here is a 134-residue protein sequence, read N- to C-terminus: Profilin-3 (134 aa).

A disulfide bridge connects residues C13 and C118. The short motif at 84–100 (AVIRGKKGSGGITIKKT) is the Involved in PIP2 interaction element. T114 is subject to Phosphothreonine.

Belongs to the profilin family. As to quaternary structure, occurs in many kinds of cells as a complex with monomeric actin in a 1:1 ratio. In terms of processing, phosphorylated by MAP kinases.

The protein resides in the cytoplasm. Its subcellular location is the cytoskeleton. In terms of biological role, binds to actin and affects the structure of the cytoskeleton. At high concentrations, profilin prevents the polymerization of actin, whereas it enhances it at low concentrations. The protein is Profilin-3 of Olea europaea (Common olive).